The primary structure comprises 243 residues: Triosephosphate isomerase (243 aa).

Residue 9–11 participates in substrate binding; that stretch reads NWK. Histidine 98 (electrophile) is an active-site residue. Glutamate 167 serves as the catalytic Proton acceptor. Substrate is bound by residues glycine 173, serine 205, and 226-227; that span reads GG.

The protein belongs to the triosephosphate isomerase family. As to quaternary structure, homodimer.

Its subcellular location is the cytoplasm. It catalyses the reaction D-glyceraldehyde 3-phosphate = dihydroxyacetone phosphate. It functions in the pathway carbohydrate biosynthesis; gluconeogenesis. The protein operates within carbohydrate degradation; glycolysis; D-glyceraldehyde 3-phosphate from glycerone phosphate: step 1/1. Its function is as follows. Involved in the gluconeogenesis. Catalyzes stereospecifically the conversion of dihydroxyacetone phosphate (DHAP) to D-glyceraldehyde-3-phosphate (G3P). In Mesomycoplasma hyorhinis (Mycoplasma hyorhinis), this protein is Triosephosphate isomerase.